Here is an 806-residue protein sequence, read N- to C-terminus: Minor extracellular protease Vpr (806 aa).

Positions 1-28 (MKKGIIRFLLVSFVLFFALSTGITGVQA) are cleaved as a signal peptide. Positions 29–160 (APASSKTSAD…TISEDAVSPQ (132 aa)) are excised as a propeptide. The Inhibitor I9 domain maps to 57–142 (TVIVELKEKS…AVYPNVTYKT (86 aa)). The region spanning 158 to 597 (SPQMDDSAPY…ARIMNAIKAD (440 aa)) is the Peptidase S8 domain. Residues Asp189 and His233 each act as charge relay system in the active site. The 79-residue stretch at 383–461 (ELVEAGIGEA…KLSLEDGEKL (79 aa)) folds into the PA domain. Ser534 functions as the Charge relay system in the catalytic mechanism.

This sequence belongs to the peptidase S8 family. In terms of processing, probably undergoes C-terminal processing or proteolysis. Auto-processed to form active enzymes of several different molecular weights.

It localises to the secreted. It is found in the cell wall. Its activity is regulated as follows. Activity is inhibited by phenylmethylsulfonyl fluoride (PMSF), but not by EDTA. Serine protease. Involved in the production of the competence and sporulation stimulating factor CSF. Is directly involved in the processing of pro-CSF to CSF. Can also cleave pro-PhrA to PhrA, but cannot cleave pro-PhrE. Shows fibrinolytic activity in vitro. Not essential for growth or sporulation. This is Minor extracellular protease Vpr from Bacillus subtilis (strain 168).